The primary structure comprises 123 residues: Large ribosomal subunit protein bL12 (123 aa).

This sequence belongs to the bacterial ribosomal protein bL12 family. In terms of assembly, homodimer. Part of the ribosomal stalk of the 50S ribosomal subunit. Forms a multimeric L10(L12)X complex, where L10 forms an elongated spine to which 2 to 4 L12 dimers bind in a sequential fashion. Binds GTP-bound translation factors.

Forms part of the ribosomal stalk which helps the ribosome interact with GTP-bound translation factors. Is thus essential for accurate translation. In Zymomonas mobilis subsp. mobilis (strain ATCC 31821 / ZM4 / CP4), this protein is Large ribosomal subunit protein bL12.